A 466-amino-acid chain; its full sequence is Uronate isomerase (466 aa).

This sequence belongs to the metallo-dependent hydrolases superfamily. Uronate isomerase family.

The catalysed reaction is D-glucuronate = D-fructuronate. It catalyses the reaction aldehydo-D-galacturonate = keto-D-tagaturonate. The protein operates within carbohydrate metabolism; pentose and glucuronate interconversion. The sequence is that of Uronate isomerase (uxaC) from Brucella melitensis biotype 1 (strain ATCC 23456 / CCUG 17765 / NCTC 10094 / 16M).